Reading from the N-terminus, the 321-residue chain is Beta-ketoacyl-[acyl-carrier-protein] synthase III (321 aa).

Residues Cys114 and His248 contribute to the active site. The segment at 249-253 (QANIR) is ACP-binding. Asn278 is a catalytic residue.

The protein belongs to the thiolase-like superfamily. FabH family. Homodimer.

The protein resides in the cytoplasm. It carries out the reaction malonyl-[ACP] + acetyl-CoA + H(+) = 3-oxobutanoyl-[ACP] + CO2 + CoA. It functions in the pathway lipid metabolism; fatty acid biosynthesis. Catalyzes the condensation reaction of fatty acid synthesis by the addition to an acyl acceptor of two carbons from malonyl-ACP. Catalyzes the first condensation reaction which initiates fatty acid synthesis and may therefore play a role in governing the total rate of fatty acid production. Possesses both acetoacetyl-ACP synthase and acetyl transacylase activities. Its substrate specificity determines the biosynthesis of branched-chain and/or straight-chain of fatty acids. This chain is Beta-ketoacyl-[acyl-carrier-protein] synthase III, found in Methylococcus capsulatus (strain ATCC 33009 / NCIMB 11132 / Bath).